The following is a 359-amino-acid chain: Peptide chain release factor 1 (359 aa).

N5-methylglutamine is present on Q235. Residues 280 to 306 (AERQRADSERSADRKSQVGSGDRSERI) form a disordered region.

The protein belongs to the prokaryotic/mitochondrial release factor family. In terms of processing, methylated by PrmC. Methylation increases the termination efficiency of RF1.

The protein resides in the cytoplasm. Peptide chain release factor 1 directs the termination of translation in response to the peptide chain termination codons UAG and UAA. In Rhizobium johnstonii (strain DSM 114642 / LMG 32736 / 3841) (Rhizobium leguminosarum bv. viciae), this protein is Peptide chain release factor 1.